Consider the following 373-residue polypeptide: Dual-specificity RNA methyltransferase RlmN (373 aa).

The Proton acceptor role is filled by Glu94. The 240-residue stretch at 100 to 339 folds into the Radical SAM core domain; the sequence is EEDRATLCVS…VIVRKTRGDD (240 aa). A disulfide bond links Cys107 and Cys344. Positions 114, 118, and 121 each coordinate [4Fe-4S] cluster. Residues 168–169, Ser200, 222–224, and Asn301 contribute to the S-adenosyl-L-methionine site; these read GE and SIH. The active-site S-methylcysteine intermediate is Cys344.

It belongs to the radical SAM superfamily. RlmN family. [4Fe-4S] cluster is required as a cofactor.

The protein localises to the cytoplasm. It catalyses the reaction adenosine(2503) in 23S rRNA + 2 reduced [2Fe-2S]-[ferredoxin] + 2 S-adenosyl-L-methionine = 2-methyladenosine(2503) in 23S rRNA + 5'-deoxyadenosine + L-methionine + 2 oxidized [2Fe-2S]-[ferredoxin] + S-adenosyl-L-homocysteine. It carries out the reaction adenosine(37) in tRNA + 2 reduced [2Fe-2S]-[ferredoxin] + 2 S-adenosyl-L-methionine = 2-methyladenosine(37) in tRNA + 5'-deoxyadenosine + L-methionine + 2 oxidized [2Fe-2S]-[ferredoxin] + S-adenosyl-L-homocysteine. In terms of biological role, specifically methylates position 2 of adenine 2503 in 23S rRNA and position 2 of adenine 37 in tRNAs. m2A2503 modification seems to play a crucial role in the proofreading step occurring at the peptidyl transferase center and thus would serve to optimize ribosomal fidelity. The sequence is that of Dual-specificity RNA methyltransferase RlmN from Shewanella loihica (strain ATCC BAA-1088 / PV-4).